The sequence spans 136 residues: MGKFMKPGKVVMVLAGRYAGRKAVIVKNIDDGTADRPYSHALVSGIDRYPRKVTATMGKKKVAKRSKIKAFVKVFNYNHLMPTRYSVDIPLDKTIVNKDVFRDPALKRKARREAKVKFEERYKTGKNKWFFQKLRF.

In terms of domain architecture, KOW spans 5–40 (MKPGKVVMVLAGRYAGRKAVIVKNIDDGTADRPYSH).

The protein belongs to the eukaryotic ribosomal protein eL27 family. In terms of assembly, component of the large ribosomal subunit.

The protein localises to the cytoplasm. Its subcellular location is the cytosol. The protein resides in the rough endoplasmic reticulum. Component of the large ribosomal subunit. This chain is Large ribosomal subunit protein eL27 (rpl27), found in Ictalurus punctatus (Channel catfish).